Here is a 598-residue protein sequence, read N- to C-terminus: Polypeptide N-acetylgalactosaminyltransferase 17 (598 aa).

The Cytoplasmic segment spans residues 1–6 (MASLRR). The helical; Signal-anchor for type II membrane protein transmembrane segment at 7–27 (VKVLLVLNLIAVAGFVIFLAK) threads the bilayer. Topologically, residues 28–598 (CRPIAVRSGD…QRWAIKNPIK (571 aa)) are lumenal. N-linked (GlcNAc...) asparagine glycosylation occurs at asparagine 50. 2 disulfide bridges follow: cysteine 142-cysteine 373 and cysteine 364-cysteine 443. Positions 151–262 (LPQISIIFIF…AGWAEPVLSR (112 aa)) are catalytic subdomain A. Aspartate 192 and arginine 223 together coordinate substrate. Mn(2+)-binding residues include aspartate 246, histidine 248, and histidine 378. The tract at residues 319–381 (PIRTPAMIGC…PCSRVAHIER (63 aa)) is catalytic subdomain B. The substrate site is built by arginine 381 and tyrosine 386. 2 N-linked (GlcNAc...) asparagine glycosylation sites follow: asparagine 461 and asparagine 486. Residues 465–594 (AYGELRNNKA…SCTGQRWAIK (130 aa)) enclose the Ricin B-type lectin domain. 3 cysteine pairs are disulfide-bonded: cysteine 478–cysteine 494, cysteine 526–cysteine 541, and cysteine 568–cysteine 586.

Belongs to the glycosyltransferase 2 family. GalNAc-T subfamily. It depends on Mn(2+) as a cofactor.

Its subcellular location is the golgi apparatus membrane. It carries out the reaction L-seryl-[protein] + UDP-N-acetyl-alpha-D-galactosamine = a 3-O-[N-acetyl-alpha-D-galactosaminyl]-L-seryl-[protein] + UDP + H(+). The enzyme catalyses L-threonyl-[protein] + UDP-N-acetyl-alpha-D-galactosamine = a 3-O-[N-acetyl-alpha-D-galactosaminyl]-L-threonyl-[protein] + UDP + H(+). The protein operates within protein modification; protein glycosylation. Its function is as follows. May catalyze the initial reaction in O-linked oligosaccharide biosynthesis, the transfer of an N-acetyl-D-galactosamine residue to a serine or threonine residue on the protein receptor. The chain is Polypeptide N-acetylgalactosaminyltransferase 17 from Mus musculus (Mouse).